The sequence spans 721 residues: Polyribonucleotide nucleotidyltransferase (721 aa).

Residues Asp-495 and Asp-501 each coordinate Mg(2+). The 60-residue stretch at 562-621 (PRITTIKIRPERIKDIIGPGGKTIKDITARTGTSINIEDDGSVSIASPNQDKVEEAIKMI) folds into the KH domain. Positions 631-699 (GRIYLGTVRK…RSGKIRLSRK (69 aa)) constitute an S1 motif domain. Residues 699–721 (KEALADSAKKSEGTEPPKGEPAK) are disordered.

This sequence belongs to the polyribonucleotide nucleotidyltransferase family. Requires Mg(2+) as cofactor.

The protein resides in the cytoplasm. It carries out the reaction RNA(n+1) + phosphate = RNA(n) + a ribonucleoside 5'-diphosphate. In terms of biological role, involved in mRNA degradation. Catalyzes the phosphorolysis of single-stranded polyribonucleotides processively in the 3'- to 5'-direction. The sequence is that of Polyribonucleotide nucleotidyltransferase from Anaeromyxobacter dehalogenans (strain 2CP-1 / ATCC BAA-258).